Consider the following 417-residue polypeptide: NADH-quinone oxidoreductase subunit D (417 aa).

The protein belongs to the complex I 49 kDa subunit family. NDH-1 is composed of 14 different subunits. Subunits NuoB, C, D, E, F, and G constitute the peripheral sector of the complex.

The protein resides in the cell inner membrane. It carries out the reaction a quinone + NADH + 5 H(+)(in) = a quinol + NAD(+) + 4 H(+)(out). NDH-1 shuttles electrons from NADH, via FMN and iron-sulfur (Fe-S) centers, to quinones in the respiratory chain. The immediate electron acceptor for the enzyme in this species is believed to be ubiquinone. Couples the redox reaction to proton translocation (for every two electrons transferred, four hydrogen ions are translocated across the cytoplasmic membrane), and thus conserves the redox energy in a proton gradient. The chain is NADH-quinone oxidoreductase subunit D from Francisella tularensis subsp. novicida (strain U112).